The following is a 982-amino-acid chain: Serine/threonine-protein kinase ATG1 (982 aa).

The region spanning 19-324 is the Protein kinase domain; that stretch reads FVIGAEIGKG…FENFFAHPVI (306 aa). Residues 25–33 and lysine 48 each bind ATP; that span reads IGKGSFAQV. Aspartate 162 serves as the catalytic Proton acceptor. Disordered regions lie at residues 334–506, 813–834, 898–918, and 947–982; these read DDIP…REKA, RLPD…SVNG, PKRR…DGHA, and RMIS…SYSS. Composition is skewed to basic and acidic residues over residues 335–359 and 372–387; these read DIPK…KSDD and HPTD…RRVE. The span at 388–398 shows a compositional bias: low complexity; sequence PPSSAAESAPS. Over residues 463–481 the composition is skewed to polar residues; it reads SNASLNRSNRESSSPTSAA.

Belongs to the protein kinase superfamily. Ser/Thr protein kinase family. APG1/unc-51/ULK1 subfamily. Homodimer. Forms a ternary complex with ATG13 and ATG17. As to expression, uniformly detected in conidia, mycelia and appressoria (at protein level).

It is found in the cytoplasm. The protein resides in the preautophagosomal structure membrane. It carries out the reaction L-seryl-[protein] + ATP = O-phospho-L-seryl-[protein] + ADP + H(+). It catalyses the reaction L-threonyl-[protein] + ATP = O-phospho-L-threonyl-[protein] + ADP + H(+). Functionally, serine/threonine protein kinase involved in the cytoplasm to vacuole transport (Cvt) and found to be essential in autophagy, where it is required for the formation of autophagosomes. Involved in the clearance of protein aggregates which cannot be efficiently cleared by the proteasome. Required for selective autophagic degradation of the nucleus (nucleophagy) as well as for mitophagy which contributes to regulate mitochondrial quantity and quality by eliminating the mitochondria to a basal level to fulfill cellular energy requirements and preventing excess ROS production. Also involved in endoplasmic reticulum-specific autophagic process, in selective removal of ER-associated degradation (ERAD) substrates. Plays a key role in ATG9 and ATG23 cycling through the pre-autophagosomal structure and is necessary to promote ATG18 binding to ATG9 through phosphorylation of ATG9. Catalyzes phosphorylation of ATG4, decreasing the interaction between ATG4 and ATG8 and impairing deconjugation of PE-conjugated forms of ATG8. Autophagy is essential to fungal development, production of appressorium turgor, and pathogenicity in rice blast disease. The polypeptide is Serine/threonine-protein kinase ATG1 (Pyricularia oryzae (strain 70-15 / ATCC MYA-4617 / FGSC 8958) (Rice blast fungus)).